Consider the following 25-residue polypeptide: Omega conotoxin-CVIF (25 aa).

Disulfide bonds link Cys-1-Cys-16, Cys-8-Cys-20, and Cys-15-Cys-25. Cysteine amide is present on Cys-25.

The protein belongs to the conotoxin O1 superfamily. In terms of tissue distribution, expressed by the venom duct.

It is found in the secreted. Omega-conotoxins act at presynaptic membranes, they bind and block voltage-gated calcium channels. This toxin blocks N-type calcium channels (Cav2.2/CACNA1B). It shows a higher potency when Cav2.2/CACNA1B is only expressed with the ancillary subunit CACNB3 (IC(50)=0.1 nM) than on Cav2.2/CACNA1B expressed with the ancillary subunits CACNA2D1 and CACNB3 (IC(50)=19.9 nM). The Cav2.2/CACNA1B block by this toxin is voltage-independent, whereas the recovery from toxin block is voltage-dependent. There is a low recovery at physiological membrane potential and a high recovery with hyperpolarized potential. This indicates that the toxin has a higher affinity for Cav2.2/CACNA1B in the inactivated state. It is noteworthy that ancillary subunits beta modulate recovery from this toxin block. Cav2.2/CACNA1B expressed with the ancillary subunit CACNB2a (isoform 2a) almost recover completely from this toxin block, whereas an expression with CACNB3 exhibits relatively weak recovery. Inhibition by this toxin of excitatory synaptic transmission is reversible. In vivo, when tested on rat model of persistent pain, this toxin blocks chronic pain behavior. This is Omega conotoxin-CVIF from Conus catus (Cat cone).